The sequence spans 283 residues: Thymidylate synthase (283 aa).

Arg-21 is a binding site for dUMP. His-51 is a binding site for (6R)-5,10-methylene-5,6,7,8-tetrahydrofolate. A dUMP-binding site is contributed by 123 to 124; it reads RR. The active-site Nucleophile is Cys-156. DUMP-binding positions include 185 to 188, Asn-196, and 226 to 228; these read RSAD and HIY. Asp-188 lines the (6R)-5,10-methylene-5,6,7,8-tetrahydrofolate pocket. Ala-282 contacts (6R)-5,10-methylene-5,6,7,8-tetrahydrofolate.

Belongs to the thymidylate synthase family. Bacterial-type ThyA subfamily. Homodimer.

The protein localises to the cytoplasm. It carries out the reaction dUMP + (6R)-5,10-methylene-5,6,7,8-tetrahydrofolate = 7,8-dihydrofolate + dTMP. Its pathway is pyrimidine metabolism; dTTP biosynthesis. Functionally, catalyzes the reductive methylation of 2'-deoxyuridine-5'-monophosphate (dUMP) to 2'-deoxythymidine-5'-monophosphate (dTMP) while utilizing 5,10-methylenetetrahydrofolate (mTHF) as the methyl donor and reductant in the reaction, yielding dihydrofolate (DHF) as a by-product. This enzymatic reaction provides an intracellular de novo source of dTMP, an essential precursor for DNA biosynthesis. The sequence is that of Thymidylate synthase from Flavobacterium johnsoniae (strain ATCC 17061 / DSM 2064 / JCM 8514 / BCRC 14874 / CCUG 350202 / NBRC 14942 / NCIMB 11054 / UW101) (Cytophaga johnsonae).